The primary structure comprises 199 residues: MQKPVKRSLKERRQQVLTVLTHMLHSERGMERMTTARIAAEVGVSEAALYRYYPSKTKMFEALIDNLEAHLFTRITQSVKNETHTAARVHNIMQMVLDFARKNPGLTRILTGHALMFEEPQLQARVAQFFDRLELQFINILQMRKLREGKGFDYEERVIAAHLVNLCEGHFMRYVRSNFRHSTQQSFEQQWRLLERLFA.

An HTH tetR-type domain is found at 11-71; it reads ERRQQVLTVL…ALIDNLEAHL (61 aa). Positions 34 to 53 form a DNA-binding region, H-T-H motif; the sequence is TTARIAAEVGVSEAALYRYY.

This sequence belongs to the nucleoid occlusion factor SlmA family. Homodimer. Interacts with FtsZ.

It localises to the cytoplasm. Its subcellular location is the nucleoid. Required for nucleoid occlusion (NO) phenomenon, which prevents Z-ring formation and cell division over the nucleoid. Acts as a DNA-associated cell division inhibitor that binds simultaneously chromosomal DNA and FtsZ, and disrupts the assembly of FtsZ polymers. SlmA-DNA-binding sequences (SBS) are dispersed on non-Ter regions of the chromosome, preventing FtsZ polymerization at these regions. The sequence is that of Nucleoid occlusion factor SlmA from Pasteurella multocida (strain Pm70).